A 432-amino-acid polypeptide reads, in one-letter code: Adenylosuccinate synthetase (432 aa).

Residues 12 to 18 (GDEGKGK) and 40 to 42 (GHT) contribute to the GTP site. The active-site Proton acceptor is the D13. Positions 13 and 40 each coordinate Mg(2+). Residues 13–16 (DEGK), 38–41 (NAGH), T128, R142, Q223, T238, and R302 each bind IMP. Catalysis depends on H41, which acts as the Proton donor. Residue 298–304 (TVTGRPR) coordinates substrate. GTP-binding positions include R304, 330 to 332 (LLD), and 412 to 414 (SVG).

Belongs to the adenylosuccinate synthetase family. As to quaternary structure, homodimer. It depends on Mg(2+) as a cofactor.

Its subcellular location is the cytoplasm. It carries out the reaction IMP + L-aspartate + GTP = N(6)-(1,2-dicarboxyethyl)-AMP + GDP + phosphate + 2 H(+). Its pathway is purine metabolism; AMP biosynthesis via de novo pathway; AMP from IMP: step 1/2. Functionally, plays an important role in the de novo pathway of purine nucleotide biosynthesis. Catalyzes the first committed step in the biosynthesis of AMP from IMP. The sequence is that of Adenylosuccinate synthetase from Limosilactobacillus reuteri (strain DSM 20016) (Lactobacillus reuteri).